Consider the following 437-residue polypeptide: MNNLVAIVGRPNVGKSTLFNRLTKTRQAIVNEEAGTTRDRQYGKSEWLGREFSVVDTGGWVVNSDDIFEEEIRKQVLLAVEEADVILFVVDVMNGVTDLDMQVATILRRANSPVIMVANKTDNNELQYNAPEFYKLGLGDPYCISAITGSGTGDLMDLIVSKFNKETSEILDDDIPRFAVVGRPNAGKSSIVNAFIGEDRNIVTEIAGTTRDSIYTRYNKFGFDFYLVDTAGIRKKNKVNEDLEYYSVVRSIRSIENADVCILMLDATRGVESQDLNILSLIQKNQKGLVVVINKWDLIEDKTAKMMKEFEATIRSRFAPFVDFPIIFASALTKQRILKVLEEARNVYENRTTKIPTARLNEEMLPLIEAYPPPSNKGKYIKIKYITQLPNTQVPSFVYFANLPQYVKEPYKRFLENKMREKWNLTGTPINIYIRQK.

2 EngA-type G domains span residues 3–167 and 176–352; these read NLVA…NKET and PRFA…ENRT. GTP-binding positions include 9–16, 56–60, 119–122, 182–189, 229–233, and 294–297; these read GRPNVGKS, DTGGW, NKTD, GRPNAGKS, DTAGI, and NKWD. The region spanning 353-437 is the KH-like domain; sequence TKIPTARLNE…TPINIYIRQK (85 aa).

Belongs to the TRAFAC class TrmE-Era-EngA-EngB-Septin-like GTPase superfamily. EngA (Der) GTPase family. As to quaternary structure, associates with the 50S ribosomal subunit.

In terms of biological role, GTPase that plays an essential role in the late steps of ribosome biogenesis. This is GTPase Der from Bacteroides thetaiotaomicron (strain ATCC 29148 / DSM 2079 / JCM 5827 / CCUG 10774 / NCTC 10582 / VPI-5482 / E50).